The following is a 690-amino-acid chain: Choline transporter-like 1 (690 aa).

A helical membrane pass occupies residues 23 to 43 (IFWLVLYVVFWIALIVIAVFS). A glycan (N-linked (GlcNAc...) asparagine) is linked at N134. The next 4 membrane-spanning stretches (helical) occupy residues 203–223 (LYKA…FSIV), 237–259 (WLIC…WSYY), 282–302 (ATIY…LVVI), and 334–354 (LLAF…VVCL). An N-linked (GlcNAc...) asparagine glycan is attached at N391. Helical transmembrane passes span 415-435 (IYII…QLAI), 464-484 (LGSV…RLIL), 565-585 (FVLF…SILL), and 594-614 (FYMA…HIIL).

Belongs to the CTL (choline transporter-like) family.

It is found in the membrane. In Anopheles gambiae (African malaria mosquito), this protein is Choline transporter-like 1.